Reading from the N-terminus, the 239-residue chain is Ribonuclease 3 (239 aa).

An RNase III domain is found at 11–133; that stretch reads HTAIQKKLGY…MFAAVSFDAD (123 aa). E46 is a binding site for Mg(2+). Residue D50 is part of the active site. Mg(2+)-binding residues include D119 and E122. E122 is an active-site residue. The 71-residue stretch at 160-230 folds into the DRBM domain; that stretch reads DGKTALQEAL…AKEALKWLEE (71 aa).

It belongs to the ribonuclease III family. In terms of assembly, homodimer. Mg(2+) serves as cofactor.

Its subcellular location is the cytoplasm. It catalyses the reaction Endonucleolytic cleavage to 5'-phosphomonoester.. In terms of biological role, digests double-stranded RNA. Involved in the processing of primary rRNA transcript to yield the immediate precursors to the large and small rRNAs (23S and 16S). Processes some mRNAs, and tRNAs when they are encoded in the rRNA operon. Processes pre-crRNA and tracrRNA of type II CRISPR loci if present in the organism. The sequence is that of Ribonuclease 3 from Neisseria gonorrhoeae (strain NCCP11945).